Consider the following 199-residue polypeptide: COMM domain-containing protein 2 (199 aa).

The 68-residue stretch at 123-190 (SYHNLEWRLD…QALEEMKTNH (68 aa)) folds into the COMM domain.

This sequence belongs to the COMM domain-containing protein 2 family. Component of the commander complex consisting of the CCC subcomplex and the retriever subcomplex. Component of the CCC (COMMD/CCDC22/CCDC93) subcomplex consisting of COMMD1, COMMD2, COMMD3, COMMD4, COMMD5, COMMD6, COMMD7, COMMD8, COMMD9, COMMD10, CCDC22 and CCDC93; within the complex forms a heterodimer with COMMD3. Interacts with RELA, RELB, NFKB1/p105, NFKB2/p100. Interacts with CCDC22, CCDC93, SCNN1B, CUL3, CUL4B, CUL5, CUL7. In terms of tissue distribution, ubiquitous.

Its subcellular location is the cytoplasm. Its function is as follows. Scaffold protein in the commander complex that is essential for endosomal recycling of transmembrane cargos; the commander complex is composed of the CCC subcomplex and the retriever subcomplex. May modulate activity of cullin-RING E3 ubiquitin ligase (CRL) complexes. May down-regulate activation of NF-kappa-B. The chain is COMM domain-containing protein 2 (COMMD2) from Homo sapiens (Human).